Reading from the N-terminus, the 141-residue chain is Hemoglobin subunit alpha (141 aa).

Residues 1–141 (VLSAADKAHV…VSTVLTSKYR (141 aa)) form the Globin domain. Serine 3 bears the Phosphoserine mark. Residues lysine 7 and lysine 11 each carry the N6-succinyllysine modification. An N6-acetyllysine; alternate modification is found at lysine 16. Lysine 16 is subject to N6-succinyllysine; alternate. Tyrosine 24 bears the Phosphotyrosine mark. Serine 35 bears the Phosphoserine mark. Lysine 40 is modified (N6-succinyllysine). At serine 49 the chain carries Phosphoserine. Histidine 58 is a binding site for O2. A heme b-binding site is contributed by histidine 87. Residue threonine 108 is modified to Phosphothreonine. At serine 124 the chain carries Phosphoserine. 2 positions are modified to phosphothreonine: threonine 134 and threonine 137. Serine 138 is modified (phosphoserine).

It belongs to the globin family. Heterotetramer of two alpha chains and two beta chains. As to expression, red blood cells.

Its function is as follows. Involved in oxygen transport from the lung to the various peripheral tissues. Functionally, hemopressin acts as an antagonist peptide of the cannabinoid receptor CNR1. Hemopressin-binding efficiently blocks cannabinoid receptor CNR1 and subsequent signaling. The chain is Hemoglobin subunit alpha (HBA) from Bradypus tridactylus (Pale-throated three-toed sloth).